A 407-amino-acid polypeptide reads, in one-letter code: Peptidase T (407 aa).

His81 is a binding site for Zn(2+). Residue Asp83 is part of the active site. Asp142 serves as a coordination point for Zn(2+). Residue Glu176 is the Proton acceptor of the active site. Zn(2+)-binding residues include Glu177, Asp199, and His381.

Belongs to the peptidase M20B family. Requires Zn(2+) as cofactor.

The protein localises to the cytoplasm. The catalysed reaction is Release of the N-terminal residue from a tripeptide.. Its function is as follows. Cleaves the N-terminal amino acid of tripeptides. The sequence is that of Peptidase T from Streptococcus pneumoniae (strain P1031).